The primary structure comprises 218 residues: Hypoxanthine-guanine phosphoribosyltransferase (218 aa).

Residue Ala-2 is modified to N-acetylalanine. Lys-69 is a binding site for GMP. At Lys-103 the chain carries N6-acetyllysine. Lys-115 is covalently cross-linked (Glycyl lysine isopeptide (Lys-Gly) (interchain with G-Cter in SUMO1); alternate). Lys-115 is covalently cross-linked (Glycyl lysine isopeptide (Lys-Gly) (interchain with G-Cter in SUMO2); alternate). GMP-binding positions include 134 to 142 (EDIIDTGKT), Lys-166, 186 to 188 (KFV), and Asp-194. Asp-138 serves as the catalytic Proton acceptor. Position 142 is a phosphothreonine (Thr-142). Asp-194 contacts Mg(2+).

It belongs to the purine/pyrimidine phosphoribosyltransferase family. In terms of assembly, homotetramer. The cofactor is Mg(2+).

Its subcellular location is the cytoplasm. It catalyses the reaction IMP + diphosphate = hypoxanthine + 5-phospho-alpha-D-ribose 1-diphosphate. It carries out the reaction GMP + diphosphate = guanine + 5-phospho-alpha-D-ribose 1-diphosphate. The protein operates within purine metabolism; IMP biosynthesis via salvage pathway; IMP from hypoxanthine: step 1/1. Converts guanine to guanosine monophosphate, and hypoxanthine to inosine monophosphate. Transfers the 5-phosphoribosyl group from 5-phosphoribosylpyrophosphate onto the purine. Plays a central role in the generation of purine nucleotides through the purine salvage pathway. In Cricetulus griseus (Chinese hamster), this protein is Hypoxanthine-guanine phosphoribosyltransferase (HPRT1).